The chain runs to 203 residues: Glycerol-3-phosphate acyltransferase (203 aa).

Transmembrane regions (helical) follow at residues T13–T33, T66–V86, A88–F108, I118–A138, and I156–M176.

It belongs to the PlsY family. Probably interacts with PlsX.

It is found in the cell inner membrane. The enzyme catalyses an acyl phosphate + sn-glycerol 3-phosphate = a 1-acyl-sn-glycero-3-phosphate + phosphate. It participates in lipid metabolism; phospholipid metabolism. Functionally, catalyzes the transfer of an acyl group from acyl-phosphate (acyl-PO(4)) to glycerol-3-phosphate (G3P) to form lysophosphatidic acid (LPA). This enzyme utilizes acyl-phosphate as fatty acyl donor, but not acyl-CoA or acyl-ACP. This chain is Glycerol-3-phosphate acyltransferase, found in Sinorhizobium medicae (strain WSM419) (Ensifer medicae).